The chain runs to 425 residues: Histone-binding protein RBBP7 (425 aa).

WD repeat units follow at residues 47-122, 128-173, 181-217, 228-269, 275-312, 318-369, and 376-403; these read QWLP…KINH, RARY…LRLR, GLSW…KVVD, VVED…HSVD, VNCL…LHSF, EIFQ…LFIH, and ISDF…IWQM.

Belongs to the WD repeat RBAP46/RBAP48/MSI1 family. Binds directly to helix 1 of the histone fold of histone H4, a region that is not accessible when H4 is in chromatin.

It localises to the nucleus. In terms of biological role, core histone-binding subunit that may target chromatin remodeling factors, histone acetyltransferases and histone deacetylases to their histone substrates in a manner that is regulated by nucleosomal DNA. Component of several complexes which regulate chromatin metabolism. This is Histone-binding protein RBBP7 (rbbp7) from Xenopus tropicalis (Western clawed frog).